The following is a 628-amino-acid chain: tRNA uridine 5-carboxymethylaminomethyl modification enzyme MnmG (628 aa).

13–18 (GAGHAG) contributes to the FAD binding site. 273–287 (GPRYCPSIEDKIVRF) is an NAD(+) binding site.

This sequence belongs to the MnmG family. Homodimer. Heterotetramer of two MnmE and two MnmG subunits. FAD serves as cofactor.

The protein localises to the cytoplasm. Its function is as follows. NAD-binding protein involved in the addition of a carboxymethylaminomethyl (cmnm) group at the wobble position (U34) of certain tRNAs, forming tRNA-cmnm(5)s(2)U34. The chain is tRNA uridine 5-carboxymethylaminomethyl modification enzyme MnmG from Buchnera aphidicola subsp. Acyrthosiphon pisum (strain APS) (Acyrthosiphon pisum symbiotic bacterium).